The sequence spans 522 residues: Protein RCC2 (522 aa).

The interval Met1–Val83 is disordered. Position 16 is a phosphoserine (Ser16). The residue at position 20 (Thr20) is a Phosphothreonine. Positions Gly24–Arg36 are enriched in basic residues. 6 positions are modified to phosphoserine: Ser43, Ser44, Ser45, Ser46, Ser50, and Ser51. The segment covering Arg71–Ala82 has biased composition (low complexity). An N6-acetyllysine mark is found at Lys92 and Lys124. 7 RCC1 repeats span residues Lys103 to Ile165, Glu168 to Glu219, Gly221 to Cys271, Gly273 to Ser347, Gln348 to Glu401, Gly403 to Asp447, and Glu448 to Arg501. The residue at position 293 (Lys293) is an N6-acetyllysine. A required for interaction with RAC1 region spans residues Lys318 to Leu325. Thr342 bears the Phosphothreonine mark. Lys377 is modified (N6-acetyllysine). The segment covering Asp502 to Pro515 has biased composition (basic and acidic residues). The segment at Asp502 to Leu522 is disordered.

In terms of assembly, interacts with RAC1. Interacts with nucleotide-free and with GDP and GTP-bound forms of RAC1, with a slight preference for GDP-bound RAC1. Binds preferentially to the nucleotide-free form of RAC1. Interacts with CORO1C. Interacts with microtubules.

Its subcellular location is the nucleus. The protein resides in the nucleolus. The protein localises to the cytoplasm. It is found in the cytoskeleton. It localises to the chromosome. Its subcellular location is the centromere. The protein resides in the spindle. The protein localises to the midbody. It is found in the cell membrane. Its function is as follows. Multifunctional protein that may affect its functions by regulating the activity of small GTPases, such as RAC1 and RALA. Required for normal progress through the cell cycle, both during interphase and during mitosis. Required for the presence of normal levels of MAD2L1, AURKB and BIRC5 on inner centromeres during mitosis, and for normal attachment of kinetochores to mitotic spindles. Required for normal organization of the microtubule cytoskeleton in interphase cells. Functions as guanine nucleotide exchange factor (GEF) for RALA. Interferes with the activation of RAC1 by guanine nucleotide exchange factors. Prevents accumulation of active, GTP-bound RAC1, and suppresses RAC1-mediated reorganization of the actin cytoskeleton and formation of membrane protrusions. Required for normal cellular responses to contacts with the extracellular matrix of adjacent cells, and for directional cell migration in response to a fibronectin gradient (in vitro). This is Protein RCC2 (RCC2) from Homo sapiens (Human).